A 431-amino-acid polypeptide reads, in one-letter code: Leucine carboxyl methyltransferase 1 (431 aa).

Residues arginine 103, glycine 131, aspartate 159, and 219–220 (DL) each bind S-adenosyl-L-methionine. Positions 228–268 (QPQQPLPPGVPIGSRGLHASPFTPGSTTQHEEQTEETSLPQ) are disordered. Glutamate 289 lines the S-adenosyl-L-methionine pocket.

Belongs to the methyltransferase superfamily. LCMT family.

The enzyme catalyses [phosphatase 2A protein]-C-terminal L-leucine + S-adenosyl-L-methionine = [phosphatase 2A protein]-C-terminal L-leucine methyl ester + S-adenosyl-L-homocysteine. Functionally, methylates the carboxyl group of the C-terminal leucine residue of protein phosphatase 2A catalytic subunits to form alpha-leucine ester residues. This chain is Leucine carboxyl methyltransferase 1 (ppm-1), found in Neurospora crassa (strain ATCC 24698 / 74-OR23-1A / CBS 708.71 / DSM 1257 / FGSC 987).